The primary structure comprises 149 residues: Large ribosomal subunit protein bL9 (149 aa).

Position 89 is an N6-acetyllysine (K89).

The protein belongs to the bacterial ribosomal protein bL9 family.

Binds to the 23S rRNA. The sequence is that of Large ribosomal subunit protein bL9 from Shigella dysenteriae serotype 1 (strain Sd197).